A 382-amino-acid chain; its full sequence is Cell division protein FtsZ (382 aa).

Residues 21-25, 108-110, Glu139, Arg143, and Asp187 each bind GTP; these read GGGSN and GTG. A disordered region spans residues 322–382; sequence RAQQQSNFNR…FLRNRRRKSR (61 aa). Positions 340–352 are enriched in basic and acidic residues; sequence KSKEKEAEKKEPR.

This sequence belongs to the FtsZ family. Homodimer. Polymerizes to form a dynamic ring structure in a strictly GTP-dependent manner. Interacts directly with several other division proteins.

Its subcellular location is the cytoplasm. Its function is as follows. Essential cell division protein that forms a contractile ring structure (Z ring) at the future cell division site. The regulation of the ring assembly controls the timing and the location of cell division. One of the functions of the FtsZ ring is to recruit other cell division proteins to the septum to produce a new cell wall between the dividing cells. Binds GTP and shows GTPase activity. In Halalkalibacterium halodurans (strain ATCC BAA-125 / DSM 18197 / FERM 7344 / JCM 9153 / C-125) (Bacillus halodurans), this protein is Cell division protein FtsZ.